The primary structure comprises 493 residues: Galactose-1-phosphate uridylyltransferase (493 aa).

Belongs to the galactose-1-phosphate uridylyltransferase type 2 family.

The protein resides in the cytoplasm. The catalysed reaction is alpha-D-galactose 1-phosphate + UDP-alpha-D-glucose = alpha-D-glucose 1-phosphate + UDP-alpha-D-galactose. It participates in carbohydrate metabolism; galactose metabolism. The protein is Galactose-1-phosphate uridylyltransferase of Streptococcus salivarius.